The primary structure comprises 490 residues: Limb region 1 protein homolog (490 aa).

At 1–19 (MEGQDEVSAREQHFHSQVR) the chain is on the extracellular side. A helical transmembrane segment spans residues 20-40 (ESTICFLLFAILYVVSYFIIT). The Cytoplasmic portion of the chain corresponds to 41–62 (RYKRKSDEQEDEDAIVNRISLF). Residues 63-83 (LSTFTLAVSAGAVLLLPFSII) form a helical membrane-spanning segment. Over 84-110 (SNEILLSFPQNYYIQWLNGSLIHGLWN) the chain is Extracellular. The helical transmembrane segment at 111 to 131 (LASLFSNLCLFVLMPFAFFFL) threads the bilayer. The Cytoplasmic portion of the chain corresponds to 132-151 (ESEGFAGLKKGIRARILETL). A helical membrane pass occupies residues 152–172 (VMLLLLALLILGIVWVASALI). Topologically, residues 173 to 187 (DNDAASMESLYDLWE) are extracellular. The helical transmembrane segment at 188-208 (FYLPYLYSCISLMGCLLLLLC) threads the bilayer. Topologically, residues 209–291 (TPVGLSRMFT…RKKASAWERN (83 aa)) are cytoplasmic. The stretch at 250–287 (RLNGLSSSVEYNIMELEQELENVKTLKTKLERRKKASA) forms a coiled coil. Residues 292–312 (LVYPAVMVLLLIETSISVLLV) traverse the membrane as a helical segment. The Extracellular segment spans residues 313–339 (ACNILCLLVDETAMPKGTRGPGIGNAS). Residues 340–360 (LSTFGFVGAALEIILIFYLMV) traverse the membrane as a helical segment. Topologically, residues 361-383 (SSVVGFYSLRFFGNFTPKKDDTT) are cytoplasmic. Residues 384–404 (MTKIIGNCVSILVLSSALPVM) traverse the membrane as a helical segment. Over 405–426 (SRTLGITRFDLLGDFGRFNWLG) the chain is Extracellular. Residues 427–447 (NFYIVLSYNLLFAIVTTLCLV) traverse the membrane as a helical segment. Residues 448 to 490 (RKFTSAVREELFKALGLHKLHLPNTSRDSETAKPSVNGHQKAL) lie on the Cytoplasmic side of the membrane.

Belongs to the LIMR family. As to expression, widely expressed with strongest expression in heart and pancreas.

The protein localises to the membrane. Functionally, putative membrane receptor. The protein is Limb region 1 protein homolog (LMBR1) of Homo sapiens (Human).